A 671-amino-acid polypeptide reads, in one-letter code: DNA ligase (671 aa).

Residues 32 to 36 (DAEYD), 81 to 82 (SL), and glutamate 113 each bind NAD(+). The active-site N6-AMP-lysine intermediate is lysine 115. NAD(+)-binding residues include arginine 136, glutamate 173, lysine 290, and lysine 314. Positions 408, 411, 426, and 432 each coordinate Zn(2+). Residues 593 to 671 (EIDSPFAGKT…EAEMIRLLGA (79 aa)) form the BRCT domain.

This sequence belongs to the NAD-dependent DNA ligase family. LigA subfamily. Mg(2+) serves as cofactor. The cofactor is Mn(2+).

It catalyses the reaction NAD(+) + (deoxyribonucleotide)n-3'-hydroxyl + 5'-phospho-(deoxyribonucleotide)m = (deoxyribonucleotide)n+m + AMP + beta-nicotinamide D-nucleotide.. Its function is as follows. DNA ligase that catalyzes the formation of phosphodiester linkages between 5'-phosphoryl and 3'-hydroxyl groups in double-stranded DNA using NAD as a coenzyme and as the energy source for the reaction. It is essential for DNA replication and repair of damaged DNA. In Salmonella paratyphi B (strain ATCC BAA-1250 / SPB7), this protein is DNA ligase.